Here is a 357-residue protein sequence, read N- to C-terminus: tRNA-specific 2-thiouridylase MnmA (357 aa).

ATP-binding positions include 7-14 and leucine 33; that span reads GLSGGVDS. The Nucleophile role is filled by cysteine 94. An intrachain disulfide couples cysteine 94 to cysteine 193. Glycine 119 is a binding site for ATP. Residues 143–145 form an interaction with tRNA region; that stretch reads KDQ. The active-site Cysteine persulfide intermediate is the cysteine 193. Positions 298–299 are interaction with tRNA; it reads RY.

This sequence belongs to the MnmA/TRMU family.

It localises to the cytoplasm. The enzyme catalyses S-sulfanyl-L-cysteinyl-[protein] + uridine(34) in tRNA + AH2 + ATP = 2-thiouridine(34) in tRNA + L-cysteinyl-[protein] + A + AMP + diphosphate + H(+). In terms of biological role, catalyzes the 2-thiolation of uridine at the wobble position (U34) of tRNA, leading to the formation of s(2)U34. This is tRNA-specific 2-thiouridylase MnmA from Synechococcus sp. (strain ATCC 27144 / PCC 6301 / SAUG 1402/1) (Anacystis nidulans).